Consider the following 689-residue polypeptide: Glycine--tRNA ligase beta subunit (689 aa).

The protein belongs to the class-II aminoacyl-tRNA synthetase family. As to quaternary structure, tetramer of two alpha and two beta subunits.

The protein localises to the cytoplasm. It catalyses the reaction tRNA(Gly) + glycine + ATP = glycyl-tRNA(Gly) + AMP + diphosphate. This Dictyoglomus turgidum (strain DSM 6724 / Z-1310) protein is Glycine--tRNA ligase beta subunit.